Reading from the N-terminus, the 84-residue chain is MGITKSLMIFFHIVLLAVSLSNNIILTSGAETTKFSYDHCFHLCVEGEYGSRECFVDCTQKGFWHGVCANKTTAKDPIHCCCYN.

The N-terminal stretch at 1 to 29 (MGITKSLMIFFHIVLLAVSLSNNIILTSG) is a signal peptide. 4 cysteine pairs are disulfide-bonded: cysteine 40/cysteine 82, cysteine 44/cysteine 68, cysteine 54/cysteine 80, and cysteine 58/cysteine 81.

The protein belongs to the DEFL family.

The protein localises to the secreted. The chain is Defensin-like protein 49 from Arabidopsis thaliana (Mouse-ear cress).